Consider the following 680-residue polypeptide: Tumor protein 63 (680 aa).

The interval 1–107 (MNFETSRCAT…MQDSDLSDPM (107 aa)) is transcription activation. Polar residues predominate over residues 122–157 (QQIQNGSSSTSPYNTDHAQNSVTAPSPYAQPSSTFD). The tract at residues 122–171 (QQIQNGSSSTSPYNTDHAQNSVTAPSPYAQPSSTFDALSPSPAIPSNTDY) is disordered. A DNA-binding region spans residues 170-362 (DYPGPHSFDV…KADEDSIRKQ (193 aa)). Residues C244, H247, C308, and C312 each coordinate Zn(2+). Over residues 351–360 (DRKADEDSIR) the composition is skewed to basic and acidic residues. 2 disordered regions span residues 351–393 (DRKA…IKKR) and 436–472 (RQQQ…MNSM). The interaction with HIPK2 stretch occupies residues 352–388 (RKADEDSIRKQQVSDSAKNGDGTKRPFRQNTHGIQMT). Over residues 379–389 (RQNTHGIQMTS) the composition is skewed to polar residues. The interval 394-443 (RSPDDELLYLPVRGRETYEMLLKIKESLELMQYLPQHTIETYRQQQQQQH) is oligomerization. A compositionally biased stretch (low complexity) spans 437-463 (QQQQQQHQHLLQKQTSMQSQSSYGNSS). An SAM domain is found at 541 to 607 (PPYPTDCSIV…WKGILDHRQL (67 aa)). The transactivation inhibition stretch occupies residues 610–680 (FSSPPHLLRT…KQQRIKEEGE (71 aa)). K676 participates in a covalent cross-link: Glycyl lysine isopeptide (Lys-Gly) (interchain with G-Cter in SUMO).

This sequence belongs to the p53 family. As to quaternary structure, binds DNA as a homotetramer. Isoform composition of the tetramer may determine transactivation activity. Interacts with HIPK2. Interacts with SSRP1, leading to stimulate coactivator activity. Interacts with WWP1. Interacts with PDS5A. Interacts (via activation domain) with NOC2L. Requires Zn(2+) as cofactor. May be sumoylated. In terms of processing, ubiquitinated. Polyubiquitination involves WWP1 and leads to proteasomal degradation of this protein. In terms of tissue distribution, widely expressed, notably in thymus, prostate, placenta, and skeletal muscle, although the precise isoform varies according to tissue type. Progenitor cell layers of skin, breast and prostate express high levels of DeltaN-type isoforms.

Its subcellular location is the nucleus. Acts as a sequence specific DNA binding transcriptional activator or repressor. The isoforms contain a varying set of transactivation and auto-regulating transactivation inhibiting domains thus showing an isoform specific activity. May be required in conjunction with TP73/p73 for initiation of p53/TP53 dependent apoptosis in response to genotoxic insults and the presence of activated oncogenes. Involved in Notch signaling by probably inducing JAG1 and JAG2. Activates RIPK4 transcription. Plays a role in the regulation of epithelial morphogenesis. The ratio of DeltaN-type and TA*-type isoforms may govern the maintenance of epithelial stem cell compartments and regulate the initiation of epithelial stratification from the undifferentiated embryonal ectoderm. Required for limb formation from the apical ectodermal ridge. Activates transcription of the p21 promoter. The sequence is that of Tumor protein 63 (Tp63) from Rattus norvegicus (Rat).